The following is a 106-amino-acid chain: Large ribosomal subunit protein eL34 (106 aa).

The protein belongs to the eukaryotic ribosomal protein eL34 family.

The sequence is that of Large ribosomal subunit protein eL34 from Hyperthermus butylicus (strain DSM 5456 / JCM 9403 / PLM1-5).